A 311-amino-acid chain; its full sequence is MTNPLYHKHIISINDLSRDELELVLRTAASLKKTPQPELLKHKVIASCFFEASTRTRLSFETSIHRLGASVVGFSDSSNTSLGKKGETLADTMSVISTYVDAIVMRHPQEGASRLAAQFSGNVPIVNAGDGANQHPTQTLLDLFTIQETQGRLDNINIAMVGDLKYGRTVHSLTQALAKFNGNHFFFIAPDALAMPAYILQMLEEKEIEYSLHESLEEVVPELDILYMTRVQKERLDPSEYANVKAQFILRSSDLTGARDNLKVLHPLPRIDEITTDVDKTPYAYYFQQAGNGIFARQALLALVLNAELAL.

Carbamoyl phosphate is bound by residues R55 and T56. Position 85 (K85) interacts with L-aspartate. Residues R106, H135, and Q138 each contribute to the carbamoyl phosphate site. 2 residues coordinate L-aspartate: R168 and R230. Carbamoyl phosphate is bound by residues L268 and P269.

The protein belongs to the aspartate/ornithine carbamoyltransferase superfamily. ATCase family. In terms of assembly, heterododecamer (2C3:3R2) of six catalytic PyrB chains organized as two trimers (C3), and six regulatory PyrI chains organized as three dimers (R2).

The enzyme catalyses carbamoyl phosphate + L-aspartate = N-carbamoyl-L-aspartate + phosphate + H(+). It participates in pyrimidine metabolism; UMP biosynthesis via de novo pathway; (S)-dihydroorotate from bicarbonate: step 2/3. Its function is as follows. Catalyzes the condensation of carbamoyl phosphate and aspartate to form carbamoyl aspartate and inorganic phosphate, the committed step in the de novo pyrimidine nucleotide biosynthesis pathway. The sequence is that of Aspartate carbamoyltransferase catalytic subunit from Yersinia pseudotuberculosis serotype IB (strain PB1/+).